A 205-amino-acid polypeptide reads, in one-letter code: Small ribosomal subunit protein uS2 (205 aa).

Belongs to the universal ribosomal protein uS2 family.

The chain is Small ribosomal subunit protein uS2 from Methanoculleus marisnigri (strain ATCC 35101 / DSM 1498 / JR1).